The primary structure comprises 264 residues: Glutamate racemase (264 aa).

Substrate-binding positions include 12–13 (DS) and 44–45 (YG). Cys-75 (proton donor/acceptor) is an active-site residue. 76–77 (NT) is a substrate binding site. Cys-186 acts as the Proton donor/acceptor in catalysis. 187 to 188 (TH) serves as a coordination point for substrate.

The protein belongs to the aspartate/glutamate racemases family.

The catalysed reaction is L-glutamate = D-glutamate. It functions in the pathway cell wall biogenesis; peptidoglycan biosynthesis. Functionally, provides the (R)-glutamate required for cell wall biosynthesis. This is Glutamate racemase from Stutzerimonas stutzeri (strain A1501) (Pseudomonas stutzeri).